The chain runs to 94 residues: Large ribosomal subunit protein bL25 (94 aa).

It belongs to the bacterial ribosomal protein bL25 family. As to quaternary structure, part of the 50S ribosomal subunit; part of the 5S rRNA/L5/L18/L25 subcomplex. Contacts the 5S rRNA. Binds to the 5S rRNA independently of L5 and L18.

This is one of the proteins that binds to the 5S RNA in the ribosome where it forms part of the central protuberance. In Cronobacter sakazakii (strain ATCC BAA-894) (Enterobacter sakazakii), this protein is Large ribosomal subunit protein bL25.